The chain runs to 518 residues: T-box transcription factor TBX5 (518 aa).

The disordered stretch occupies residues 1 to 46 (MADTDEGFGLARTPLEPDSKDRSCDSKPESALGAPSKSPSSPQAAF). Over residues 15–28 (LEPDSKDRSCDSKP) the composition is skewed to basic and acidic residues. The span at 34 to 45 (APSKSPSSPQAA) shows a compositional bias: low complexity. The segment at residues 58 to 238 (LHERELWLKF…NNPFAKGFRG (181 aa)) is a DNA-binding region (T-box). Disordered stretches follow at residues 254 to 307 (EYPV…LLPP) and 330 to 352 (ECSSTEHPYKKPYMETSPSEEDT). The span at 269–301 (SNHSPFSSETRALSTSSNLGSQYQCENGVSGPS) shows a compositional bias: polar residues. Lys339 carries the post-translational modification N6-acetyllysine.

Monomer. Homodimer (via the T-box); binds DNA as homodimer. Interacts (via the T-box) with NKX2-5 (via the homeobox); this complex binds DNA. Interacts with GATA4. Interacts with KAT2A and KAT2B. Post-translationally, acetylation at Lys-339 by KAT2A and KAT2B promotes nuclear retention.

The protein localises to the nucleus. It is found in the cytoplasm. DNA-binding protein that regulates the transcription of several genes and is involved in heart development and limb pattern formation. Binds to the core DNA motif of NPPA promoter. This chain is T-box transcription factor TBX5 (Tbx5), found in Mus musculus (Mouse).